The chain runs to 342 residues: Probable deoxyhypusine synthase (342 aa).

Lys307 serves as the catalytic Nucleophile.

Belongs to the deoxyhypusine synthase family. NAD(+) serves as cofactor.

The enzyme catalyses [eIF5A protein]-L-lysine + spermidine = [eIF5A protein]-deoxyhypusine + propane-1,3-diamine. Its pathway is protein modification; eIF5A hypusination. Catalyzes the NAD-dependent oxidative cleavage of spermidine and the subsequent transfer of the butylamine moiety of spermidine to the epsilon-amino group of a specific lysine residue of the eIF-5A precursor protein to form the intermediate deoxyhypusine residue. This chain is Probable deoxyhypusine synthase (dys), found in Pyrococcus horikoshii (strain ATCC 700860 / DSM 12428 / JCM 9974 / NBRC 100139 / OT-3).